The chain runs to 563 residues: uncharacterized protein (563 aa).

The Cytoplasmic segment spans residues 1–13 (MASRSCICQVSAG). The helical transmembrane segment at 14 to 34 (IIFLIGAALLVAGLVIVLNVF) threads the bilayer. Topologically, residues 35-528 (PNIVNNQIND…LFTPVSTVNT (494 aa)) are lumenal. Asparagine 43, asparagine 112, asparagine 133, asparagine 188, asparagine 265, asparagine 295, asparagine 315, and asparagine 502 each carry an N-linked (GlcNAc...) asparagine glycan. The chain crosses the membrane as a helical span at residues 529 to 549 (ICWIAVGLGAGLIALSIVMVI). Residues 550-563 (VSFCCFRDEHHKTS) are Cytoplasmic-facing.

This sequence belongs to the CD36 family.

It localises to the membrane. This is an uncharacterized protein from Caenorhabditis elegans.